The primary structure comprises 911 residues: MDNKTDHKNDLNSQPVPSSAPHKERLTPMMEQYIEIKAVNSDSLLFYRMGDFYELFFNDAIEAAQVLGITLTTRGKHLGEDIPMCGVPVHAADDYLQKLISSGYRVAVCEQTEDPAEAKKRGSKSIVRRDVVRLVTPGTITEEKLLDPTRANYLMTLARIKTSKGEEFALSWIDISTGIFRVTESHPEKLLADIMRVDPQEIIVADSFFHDKSHKSLFNVLDRIVSPQHVSLFDAVTAERDICSYFKLSTLEGVADYSRSELSAIAAAIRYIEKTQITHRPPLMRPERQNENATLFIDAATRLSLELIRTTSGQRDGSLLKAIDRTVTGGGSRLLVDRLIAPLTTPSAIDKRLDSIAFFLRNTSLAEAIQLILKGGPDMPRAVSRLALGRGGPRDIASIQRGFEIIHGLNQLLNNELLPQEISDVQQVFSHLPTALHFRLEQALSDDLPLLKRDGGFIRPNYHKELDEMRALRDESRLIIAELQAQYAKETDIKTLKIKHNNILGYFIEITNLQATALTNTPQAKARFIHRQTLANVMRFTTTELVELEGRIAHAATHAMTLELEIFDTLVHEITEQVDFIRKAAEALAILDVSVALARLAEEQEYCRPKIDQSLTFRITAGRHPVVEQALRKQAAEPFVANNCDLSVQKNHQYAAIWLLTGPNMGGKSTFLRQNALITIMAQMGSFVPASSAHIGVVDRLFSRVGASDDLARGRSTFMMEMVETATILNHASSHSLVILDEIGRGTSTFDGLSIAWAAVEYLHEVNQCRAILATHFHEMTALTEKLDRLYNVTMKVKNWDGDVVFLHEVMPGAADRSYGVQVAKLAGLPTAVITRATDVLHQLEQGETAGKGNKLIDDLPLFSLKTTSLINEETNKHCMLHEALKNIYPDELSPKEALEVLYRLKQLEKK.

Basic and acidic residues predominate over residues Met1–Asp10. Residues Met1–Glu24 form a disordered region. Position 662–669 (Gly662–Ser669) interacts with ATP.

This sequence belongs to the DNA mismatch repair MutS family.

In terms of biological role, this protein is involved in the repair of mismatches in DNA. It is possible that it carries out the mismatch recognition step. This protein has a weak ATPase activity. The protein is DNA mismatch repair protein MutS of Bartonella quintana (strain Toulouse) (Rochalimaea quintana).